The sequence spans 252 residues: MAIALSTLVEEADRYLDAARIQDYCPNGLQVEGRPQVRRIVSGVTASQALLDAAVEADADVVLVHHGYFWKGENPCVVGMKQRRLKTLLNNDISLLAYHLPLDLHPEVGNNVQLARQLGFEVEGPLEPGNPRSIVLLGSLAEPMQPADFARHVRDALGREPLLVDAGQPIRRIAWCTGGAQGYIDQAIAAGVDAYLTGEVSEQTVHSARENGISFIAAGHHATERYGVQALGDYLGKRFAIEHLFIDCPNPA.

The a divalent metal cation site is built by His-65, His-66, Asp-103, His-220, and Glu-224.

The protein belongs to the GTP cyclohydrolase I type 2/NIF3 family. In terms of assembly, homohexamer.

In Pseudomonas aeruginosa (strain ATCC 15692 / DSM 22644 / CIP 104116 / JCM 14847 / LMG 12228 / 1C / PRS 101 / PAO1), this protein is GTP cyclohydrolase 1 type 2 homolog.